Here is a 368-residue protein sequence, read N- to C-terminus: RING finger protein 32 (368 aa).

Positions 45 to 82 are disordered; that stretch reads RKKEKKSKSLKRDATAIIDTGLRKSTEGPNMEDPEKEY. The RING-type 1; atypical zinc-finger motif lies at 129 to 171; that stretch reads CPICKEEFELHPQVLLSCSHVFHRACLQAFEKFTNKKTCPLCR. One can recognise an IQ domain in the interval 188–217; that stretch reads RVKCATRIQAYWRGYIVRKWYRNLRKIIPP. The RING-type 2; atypical zinc-finger motif lies at 295-358; it reads CSICLTPLSF…APFHVCPLCR (64 aa).

It is found in the cytoplasm. May play a role in sperm formation. The sequence is that of RING finger protein 32 (Rnf32) from Mus musculus (Mouse).